The sequence spans 767 residues: MDQARSAFSNLFGGAPLSYTRFSLARQVDGDNSHVEMKLAVDEEENVDNNVRSNHASLTKPKRFNGSFCYAVIAVIIFFLIGFMIGYLGYCKRVEPKSECGRSGDSKEIEGTEPPETEEYFPETPSRLLWTDLRTMLSERLTATEFTNTIKRLNGNSYVPREAGSQKDESLAFFIENQFREFKLNKVWRDEHFVKIQVKGSNAQSSVTVVNGSGDMISLVENPTGYVAYSKATTVTGKLVHANFGTKEDYEALSYPVNGSLVIVRAGEITFAQKVANAESLNAVGVLIYMDQAKFPIVNANLPVFGHAHLGTGDPYTPGFPSFNHTQFPPSQSSGLPNIPVQTISRAAAEALFANMKGDCPSSWKTDSSCRLEFPGDKNVKLTVNNELKEIRIFNVFGVIKGFEEPDRYVVIGAQRDAWGPGAAKSSVGTALLLELARIFSDMVSKGGFKPSRSIVFASWGAGDFGAIGATEWLEGYLSSLHLKAFTYINLDKAVLGAKNFKVSASPLLYSLIEKTMQEVKHPVTGLSLYRDSNWINKVEKLSFDNAAFPFLAYSGIPALSFCFCEDTEYPYLGTTMDTYEVLSQNVPELSRLTRAAAEVAGQLLIKLSYDVELNLNYDMYNDKILSFVKDMNQFRADIKEMGLNLQWLYSARGDFFRATSRLTTDYKNAERANRVVMREINDRIMKVEYHFLSPYVSPRESPFRHIFWGSGSHTLSALLEHLKLRQKNSGAFNETLLRNQLALATWTIQGAANALSGDIWDIDNEF.

The Cytoplasmic portion of the chain corresponds to M1–S67. Phosphoserine occurs at positions 9 and 18. Y19 carries the post-translational modification Phosphotyrosine. The Endocytosis signal motif lies at Y19 to F22. Phosphothreonine is present on T20. Residue S23 is modified to Phosphoserine. The Stop-transfer sequence signature appears at K60–R63. The helical; Signal-anchor for type II membrane protein transmembrane segment at F68–L88 threads the bilayer. C69 carries S-palmitoyl cysteine lipidation. Topologically, residues G89 to F767 are extracellular. Basic and acidic residues predominate over residues P96–E110. The interval P96–P122 is disordered. Residues G111–F121 show a composition bias toward acidic residues. N-linked (GlcNAc...) asparagine glycosylation is found at N211, N258, and N324. A PA domain is found at S230–F320. Residues T576–F767 form a ligand-binding region. Residues R653 to D655 carry the Cell attachment site motif. N734 is a glycosylation site (N-linked (GlcNAc...) asparagine).

It belongs to the peptidase M28 family. M28B subfamily. Homodimer; disulfide-linked. Binds one transferrin or HFE molecule per subunit. Interacts with SH3BP4. Interacts with STEAP3; facilitates TFRC endocytosis in erythroid precursor cells. In terms of processing, stearoylated by ZDHHC6 which inhibits TFRC-mediated activation of the JNK pathway and promotes mitochondrial fragmentation. Stearoylation does not affect iron uptake.

It localises to the cell membrane. It is found in the melanosome. In terms of biological role, cellular uptake of iron occurs via receptor-mediated endocytosis of ligand-occupied transferrin receptor into specialized endosomes. Endosomal acidification leads to iron release. The apotransferrin-receptor complex is then recycled to the cell surface with a return to neutral pH and the concomitant loss of affinity of apotransferrin for its receptor. Transferrin receptor is necessary for development of erythrocytes and the nervous system. Positively regulates T and B cell proliferation through iron uptake. Acts as a lipid sensor that regulates mitochondrial fusion by regulating activation of the JNK pathway. When dietary levels of stearate (C18:0) are low, promotes activation of the JNK pathway, resulting in HUWE1-mediated ubiquitination and subsequent degradation of the mitofusin MFN2 and inhibition of mitochondrial fusion. When dietary levels of stearate (C18:0) are high, TFRC stearoylation inhibits activation of the JNK pathway and thus degradation of the mitofusin MFN2. Mediates uptake of NICOL1 into fibroblasts where it may regulate extracellular matrix production. The protein is Transferrin receptor protein 1 (TFRC) of Equus caballus (Horse).